Reading from the N-terminus, the 158-residue chain is UPF0266 membrane protein YobD (158 aa).

The next 3 helical transmembrane spans lie at 6 to 26 (LVLI…QFIM), 45 to 65 (IDSV…VTNH), and 67 to 87 (ALIT…IFWI).

The protein belongs to the UPF0266 family.

The protein resides in the cell inner membrane. This is UPF0266 membrane protein YobD from Shigella boydii serotype 4 (strain Sb227).